Reading from the N-terminus, the 567-residue chain is GBF-interacting protein 1 (567 aa).

3 disordered regions span residues 70–150, 164–192, and 545–567; these read ERKK…PSGI, DKVD…SKES, and PIGP…GNNY. Polar residues-rich tracts occupy residues 91–102 and 121–136; these read FASSYTDASNGR and TASS…TKPS. The segment covering 182-191 has biased composition (basic and acidic residues); it reads DVVEPDKSKE. Polar residues predominate over residues 550-567; sequence HVTNQQPQAARTNLGNNY.

Belongs to the GIP1 family. In terms of assembly, monomer, homodimer, homooligomer. Under non-reducing conditions, predominantly present in high molecular weight forms, but predominates in low molecular weight monomers under reducing conditions. Interacts with BZIP16, BZIP68 and GBF1. Interacts with LBD18. In terms of tissue distribution, expressed in roots, leaves, stems and flowers.

The protein localises to the nucleus. In terms of biological role, plant specific protein that enhances G-box-binding factor (GBF) DNA binding activity. May function as a nuclear chaperone or lever and regulate the multimeric state of GBFs. May contribute to bZIP-mediated gene regulation. Is able to refold denatured rhodanese in vitro. Reduces DNA-binding activity of BZIP16, BZIP68 and GBF1 under non-reducing conditions through direct physical interaction. Acts as a negative co-regulator in red and blue light-mediated hypocotyl elongation. Functions to promote hypocotyl elongation during the early stages of seedling development by regulating the repression effect by BZIP16 and the activation effect by BZIP68 and GBF1 on LHCB2.4 expression. Enhances transcriptional activity of LBD18 in the EXP14 promoter. May act as a transcriptional coactivator of LBD18. The chain is GBF-interacting protein 1 from Arabidopsis thaliana (Mouse-ear cress).